The sequence spans 248 residues: MKNWIKVAVAAIALSAATVQAATEVKVGMSGRYFPFTFVKQDKLQGFEVDMWDEIGKRNDYKIEYVTANFSGLFGLLETGRIDTISNQITMTDARKAKYLFADPYVVDGAQITVRKGNDSIQGVEDLAGKTVAVNLGSNFEQLLRDYDKDGKINIKTYDTGIEHDVALGRADAFIMDRLSALELIKKTGLPLQLAGEPFETIQNAWPFVDNEKGRKLQAEVNKALAEMRADGTVEKISVKWFGADITK.

The first 21 residues, 1 to 21, serve as a signal peptide directing secretion; it reads MKNWIKVAVAAIALSAATVQA.

The protein belongs to the bacterial solute-binding protein 3 family.

The protein localises to the periplasm. Probably part of a binding-protein-dependent transport system for an amino acid. The sequence is that of Putative amino-acid ABC transporter-binding protein PatH (patH) from Vibrio harveyi (Beneckea harveyi).